The following is a 248-amino-acid chain: Transcription factor bHLH35 (248 aa).

Low complexity predominate over residues 37-54; it reads SGSYDSSSPDGAASSPAS. The tract at residues 37 to 60 is disordered; the sequence is SGSYDSSSPDGAASSPASKNIVSE. The 50-residue stretch at 51–100 folds into the bHLH domain; it reads SPASKNIVSERNRRQKLNQRLFALRSVVPNITKMDKASIIKDAISYIEGL.

In terms of assembly, homodimer. Expressed constitutively in roots, leaves, stems, and flowers.

It is found in the nucleus. The polypeptide is Transcription factor bHLH35 (BHLH35) (Arabidopsis thaliana (Mouse-ear cress)).